A 468-amino-acid polypeptide reads, in one-letter code: Neuronal acetylcholine receptor subunit alpha-5 (468 aa).

The signal sequence occupies residues 1–22 (MATRGSGPRAPRLLLLVQLVAG). Residues 23–254 (RCGLAGAAGG…VIKRLPLFYT (232 aa)) lie on the Extracellular side of the membrane. N-linked (GlcNAc...) asparagine glycans are attached at residues asparagine 155, asparagine 183, and asparagine 229. The cysteines at positions 170 and 184 are disulfide-linked. An intrachain disulfide couples cysteine 234 to cysteine 235. Transmembrane regions (helical) follow at residues 255–275 (LFLI…FYLP), 282–302 (ICLC…IEEI), and 317–337 (LVFT…AINI). Over 338-429 (HHRSSSTHNA…WKFIAQVLDR (92 aa)) the chain is Cytoplasmic. A helical membrane pass occupies residues 430–451 (MFLWTFLFVSIVGSLGLFVPVI). Residues 452-468 (YKWANILIPVHIGNANK) lie on the Extracellular side of the membrane.

The protein belongs to the ligand-gated ion channel (TC 1.A.9) family. Acetylcholine receptor (TC 1.A.9.1) subfamily. Alpha-5/CHRNA5 sub-subfamily. Neuronal AChR that forms heteropentamers composed of two different type of subunits: alpha and non-alpha (beta). CHRNA5/alpha-5 subunit is only able to form functional nAChRs when co-assembled with another alpha subunit, can be combined to CHRNA4/alpha-4 or CHRNA3/alpha-3 and CHRNB4/beta-4 or CHRNB2/beta-2 to give rise to functional receptors. Interacts with LYPD6.

The protein resides in the synaptic cell membrane. The protein localises to the cell membrane. The catalysed reaction is Ca(2+)(in) = Ca(2+)(out). It catalyses the reaction K(+)(in) = K(+)(out). The enzyme catalyses Na(+)(in) = Na(+)(out). Activated by a myriad of ligands such as acetylcholine, cytisine, nicotine, choline and epibatidine. Component of neuronal acetylcholine receptors (nAChRs) that function as pentameric, ligand-gated cation channels with high calcium permeability among other activities. nAChRs are excitatory neurotrasnmitter receptors formed by a collection of nAChR subunits known to mediate synaptic transmission in the nervous system and the neuromuscular junction. Each nAchR subunit confers differential attributes to channel properties, including activation, deactivation and desensitization kinetics, pH sensitivity, cation permeability, and binding to allosteric modulators. Has an accessory rather than functional role and is only able to form functional nAChRs when co-assembled with another beta subunit. Participates in pentameric assemblies along with CHRNA3, CHRNA4, CHRNB2 and CHRNB4. Increases receptor sensitivity to acetylcholine and nicotine when associated with CHRNA4 and CHRNB2. Plays a role in nicotine addiction. The chain is Neuronal acetylcholine receptor subunit alpha-5 (CHRNA5) from Pan troglodytes (Chimpanzee).